A 1207-amino-acid chain; its full sequence is DNA-directed RNA polymerase subunit beta (1207 aa).

Belongs to the RNA polymerase beta chain family. In terms of assembly, the RNAP catalytic core consists of 2 alpha, 1 beta, 1 beta' and 1 omega subunit. When a sigma factor is associated with the core the holoenzyme is formed, which can initiate transcription.

It carries out the reaction RNA(n) + a ribonucleoside 5'-triphosphate = RNA(n+1) + diphosphate. Functionally, DNA-dependent RNA polymerase catalyzes the transcription of DNA into RNA using the four ribonucleoside triphosphates as substrates. The chain is DNA-directed RNA polymerase subunit beta from Enterococcus faecalis (strain ATCC 700802 / V583).